Consider the following 516-residue polypeptide: Maturase K (516 aa).

It belongs to the intron maturase 2 family. MatK subfamily.

It is found in the plastid. It localises to the chloroplast. Usually encoded in the trnK tRNA gene intron. Probably assists in splicing its own and other chloroplast group II introns. The protein is Maturase K of Disporum sessile (Japanese fairy bells).